An 88-amino-acid chain; its full sequence is MPIIESSIQRERLNKAERAVRAPQISAYRTAVKNFEKAAAAGADNLQELFSKTSAAIDKAETKNLIKKNKAARDKARLYKLLKAATSK.

The protein belongs to the bacterial ribosomal protein bS20 family.

Functionally, binds directly to 16S ribosomal RNA. In Oenococcus oeni (strain ATCC BAA-331 / PSU-1), this protein is Small ribosomal subunit protein bS20.